Reading from the N-terminus, the 334-residue chain is MIPTPTRDAPNIPSFLAADVGGTHVRVSVVAAAPTCASPPQLFDVRTYRCADYPSLSTILNDFLGTRSAVRDCVIASAGFQRSDGTVITTNLPWPLSPHRLRADLNLAEVCLVNDFEALAYATEDMEPAQLLHLTGPAKAQDGPRLLLGPGTGLGAALWIPNNGRPIVLPTEAGQAALPSTTELEMQLVRHMLNNRTHVPIEHALSGPGILNVYRALCALQSVLPQHASPDAISHAAAAGTDMLSSQTLEVFCDFLGSIVGDLVMMYGAQGGVYLAGGILPQLREPLLRSHFVERFLNKGPMGEALQHVPVRLIEHGQLGIVGAARWYLNKKAT.

18–23 (ADVGGT) contributes to the ATP binding site.

This sequence belongs to the bacterial glucokinase family.

This chain is Glucokinase-like protein PD_0680, found in Xylella fastidiosa (strain Temecula1 / ATCC 700964).